A 208-amino-acid chain; its full sequence is Uracil phosphoribosyltransferase (208 aa).

5-phospho-alpha-D-ribose 1-diphosphate is bound by residues Arg-78, Arg-103, and 130-138; that span reads DPMLATGGS. Uracil is bound by residues Ile-193 and 198-200; that span reads GDA. Asp-199 serves as a coordination point for 5-phospho-alpha-D-ribose 1-diphosphate.

It belongs to the UPRTase family. It depends on Mg(2+) as a cofactor.

The catalysed reaction is UMP + diphosphate = 5-phospho-alpha-D-ribose 1-diphosphate + uracil. It participates in pyrimidine metabolism; UMP biosynthesis via salvage pathway; UMP from uracil: step 1/1. Allosterically activated by GTP. Functionally, catalyzes the conversion of uracil and 5-phospho-alpha-D-ribose 1-diphosphate (PRPP) to UMP and diphosphate. The protein is Uracil phosphoribosyltransferase of Yersinia pestis.